A 469-amino-acid chain; its full sequence is tRNA modification GTPase MnmE (469 aa).

(6S)-5-formyl-5,6,7,8-tetrahydrofolate is bound by residues arginine 38, glutamate 95, and arginine 134. The TrmE-type G domain maps to 230–392 (GIRVALVGPP…LRRGLAALVD (163 aa)). Residues 240 to 245 (NAGKSS), 259 to 265 (SAQAGTT), and 284 to 287 (DTAG) each bind GTP. Mg(2+)-binding residues include serine 244 and threonine 265. Position 468 (lysine 468) interacts with (6S)-5-formyl-5,6,7,8-tetrahydrofolate.

The protein belongs to the TRAFAC class TrmE-Era-EngA-EngB-Septin-like GTPase superfamily. TrmE GTPase family. Homodimer. Heterotetramer of two MnmE and two MnmG subunits. The cofactor is K(+).

The protein resides in the cytoplasm. Functionally, exhibits a very high intrinsic GTPase hydrolysis rate. Involved in the addition of a carboxymethylaminomethyl (cmnm) group at the wobble position (U34) of certain tRNAs, forming tRNA-cmnm(5)s(2)U34. In Halorhodospira halophila (strain DSM 244 / SL1) (Ectothiorhodospira halophila (strain DSM 244 / SL1)), this protein is tRNA modification GTPase MnmE.